The primary structure comprises 242 residues: MTLPWNTFPGSTVPPVVPSVEDIIRMLVAGQQKIAIQNLLQSQSKEQVNGTSHDLQNWLTSLCISPSSSPTPSNASTSTIPAQMTNENVLHLQIQSQLFSNLGTPWFLNPEQHNKTNNAIRKRPKKEFICKYCARHFTKSYNLMIHERTHTNERPFHCETCGKSFRRQDHLRDHKYIHAKEKPHKCEICGKGFCQLRTLNVHRSCHHVQEPISETFMLGAIKFGKADSLLIDAEPLIDVTTI.

3 C2H2-type zinc fingers span residues 128 to 150 (FICKYCARHFTKSYNLMIHERTH), 156 to 178 (FHCETCGKSFRRQDHLRDHKYIH), and 184 to 207 (HKCEICGKGFCQLRTLNVHRSCHH).

Belongs to the Odd C2H2-type zinc-finger protein family.

Its subcellular location is the nucleus. Its function is as follows. May function as transcription regulator. Essential for larval development. Required for morphogenesis and function of the digestive tract. This chain is Protein odd-skipped-related 1, found in Caenorhabditis elegans.